The sequence spans 321 residues: MGELPLDINIQEPRWDQRTFLGRARHFFTVTDPRNLLLSGAQLEASRNIVQNYRAGIVTPGLTEDQLWRAKYVYDSAFHPDTGEKVVLIGRMSAQVPMNMTITGCMLIFYRKTPTVVFWQWLNQSFNAVVNYSNRSGDAPITVRQLGMAYVSATTGAVATALGLKSLTKHLPPLVGRFVPFAAVAAANCINIPLMRQRELQVGIPVTNEQGQRLGHSVAAAKKGIFQVVISRICMAIPAMAIPPVIMDTLEKKDFLKRRPWLGAPLQMGLVGFCLVFATPLCCALFPQRSSIHVSRLEPELRAQIQEQNPSIEVVYYNKGL.

The residue at position 1 (methionine 1) is an N-acetylmethionine. 4 helical membrane-spanning segments follow: residues 146 to 164 (LGMA…ALGL), 174 to 194 (LVGR…NIPL), 226 to 246 (FQVV…PPVI), and 266 to 286 (LQMG…CALF).

Belongs to the sideroflexin family.

It localises to the mitochondrion membrane. The catalysed reaction is L-serine(in) = L-serine(out). In terms of biological role, mitochondrial serine transporter that mediates transport of serine into mitochondria, an important step of the one-carbon metabolism pathway. Mitochondrial serine is converted to glycine and formate, which then exits to the cytosol where it is used to generate the charged folates that serve as one-carbon donors. This is Sideroflexin-3 (SFXN3) from Bos taurus (Bovine).